Reading from the N-terminus, the 353-residue chain is Melanin-concentrating hormone receptor 1 (353 aa).

The segment at 1 to 31 (MDLEASLLPTGPNTSNTSDGPDNLTSAGSPP) is disordered. Residues 1-45 (MDLEASLLPTGPNTSNTSDGPDNLTSAGSPPRSGSVSYINIIMPS) lie on the Extracellular side of the membrane. Over residues 11–31 (GPNTSNTSDGPDNLTSAGSPP) the composition is skewed to polar residues. Residues Asn13, Asn16, and Asn23 are each glycosylated (N-linked (GlcNAc...) asparagine). The chain crosses the membrane as a helical span at residues 46–66 (VFGTICLLGIIGNSMVIFAVV). Topologically, residues 67 to 79 (KKSKLHWCNNVPD) are cytoplasmic. Residues 80–100 (IFIINLSVVDLLFLLGMPFMI) traverse the membrane as a helical segment. Over 101 to 118 (HQLMGNGVWHFGETMCTL) the chain is Extracellular. An intrachain disulfide couples Cys116 to Cys194. A helical transmembrane segment spans residues 119 to 139 (ITAMDANSQFTSTYILTAMAI). Over 140–161 (DRYLATVHPISSTKFRKPSVAT) the chain is Cytoplasmic. The helical transmembrane segment at 162-182 (LVICLLWALSFISITPVWLYA) threads the bilayer. Residues 183-204 (RLIPFPGGAVGCGIRLPNPDTD) are Extracellular-facing. The chain crosses the membrane as a helical span at residues 205-225 (LYWFTLYQFFLAFALPFVVIT). Topologically, residues 226–257 (AAYVRILQRMTSSVAPASQRSIRLRTKRVTRT) are cytoplasmic. A helical membrane pass occupies residues 258 to 278 (AIAICLVFFVCWAPYYVLQLT). Residues 279–294 (QLSISRPTLTFVYLYN) are Extracellular-facing. Residues 295-315 (AAISLGYANSCLNPFVYIVLC) form a helical membrane-spanning segment. Topologically, residues 316-353 (ETFRKRLVLSVKPAAQGQLRAVSNAQTADEERTESKGT) are cytoplasmic.

The protein belongs to the G-protein coupled receptor 1 family. Interacts with NCDN.

It localises to the cell membrane. Receptor for melanin-concentrating hormone, coupled to both G proteins that inhibit adenylyl cyclase and G proteins that activate phosphoinositide hydrolysis. This chain is Melanin-concentrating hormone receptor 1, found in Macaca mulatta (Rhesus macaque).